Here is a 721-residue protein sequence, read N- to C-terminus: Protein quick-to-court (721 aa).

5 disordered regions span residues 1-42, 143-210, 360-379, 393-428, and 441-471; these read MMTS…RIPH, VGNS…ASVA, SSPE…EAEL, DEGN…MQSS, and SSVH…CGAG. Over residues 17 to 31 the composition is skewed to basic and acidic residues; it reads QVQREKDNDSAEDSH. Over residues 161-201 the composition is skewed to low complexity; the sequence is NGGSDISSSGTSSSSSNNKESSPRTTRTPRTPQTPQTPQTP. The span at 362–379 shows a compositional bias: basic and acidic residues; sequence PEERSASSDAVTVREAEL. Low complexity predominate over residues 406 to 420; that stretch reads RQQQQQANHSLQAMQ. A compositionally biased stretch (polar residues) spans 441 to 454; it reads SSVHSKDSQTQSEA. Residues 511 to 569 adopt a coiled-coil conformation; it reads KRSHNDKVEALLQKLAECNTRYSDMVPDYEQAKQRIRELEKQLEDLQRKLIEHEEKQNK. The 49-residue stretch at 668 to 716 folds into the GRIP domain; that stretch reads HVDPEVTLQFLKSAIFYFLTDKENSQGHLQAIESILEFTDAEKQKISAA.

Expressed in the third antennal segment and the maxillary palp, with increased expression near the cuticle of both olfactory organs. Also detected in the second antenna segment. In the brain, expressed in the central nervous system, with high levels of expression in the visual system including the retina and optic lobe, and uniform expression in the cortex. Detected in the thorax and abdomen, with increased expression in the ventral ganglion. In males, detected in the reproductive tract including the ejaculatory bulb and testis.

Its function is as follows. In adult males, modulates sexual behavior by playing a role in sex discrimination and maintaining normal levels of sexual activity towards both males and females. The sequence is that of Protein quick-to-court from Drosophila melanogaster (Fruit fly).